The following is a 113-amino-acid chain: U11-theraphotoxin-Hhn1f (113 aa).

The N-terminal stretch at methionine 1–alanine 21 is a signal peptide. The propeptide occupies aspartate 22 to arginine 74. Residues glutamate 61–cysteine 82 are disordered. 3 disulfides stabilise this stretch: cysteine 75-cysteine 90, cysteine 82-cysteine 95, and cysteine 89-cysteine 110.

The protein belongs to the neurotoxin 14 (magi-1) family. 01 (HNTX-16) subfamily. As to expression, expressed by the venom gland.

It localises to the secreted. Probable ion channel inhibitor. The polypeptide is U11-theraphotoxin-Hhn1f (Cyriopagopus hainanus (Chinese bird spider)).